Consider the following 890-residue polypeptide: UPF0182 protein Ppro_2689 (890 aa).

Transmembrane regions (helical) follow at residues 6 to 26 (FILI…LLAF), 50 to 70 (AGSG…NLLL), 102 to 122 (LGIP…AMQW), 157 to 177 (TITA…VLVY), 200 to 220 (LAIL…LDCF), 244 to 264 (TYRI…IGLW), and 266 to 286 (GAWR…VIGI).

The protein belongs to the UPF0182 family.

It localises to the cell membrane. The chain is UPF0182 protein Ppro_2689 from Pelobacter propionicus (strain DSM 2379 / NBRC 103807 / OttBd1).